Consider the following 468-residue polypeptide: H(+)/Cl(-) exchange transporter ClcA (468 aa).

Topologically, residues 1–32 (MIKRERIVKSVLAHVPKDAINQFVSRGSTPTS) are cytoplasmic. Residues 33–69 (FSVLFMAAIVGTLAGLVGTYFEIAVHFVSETRTEWLK) traverse the membrane as a helical segment. The Periplasmic segment spans residues 70–76 (SEIGSVL). The helical transmembrane segment at 77–100 (PLWLAAILISGALAFIGYYLVNRF) threads the bilayer. Residues 106-110 (GSGIP) carry the Selectivity filter part_1 motif. Residue serine 107 participates in chloride binding. The segment at residues 109–116 (IPEIEGAM) is an intramembrane region (helical). The Cytoplasmic portion of the chain corresponds to 117–123 (DNIRSVR). A run of 2 helical transmembrane segments spans residues 124 to 141 (WWRV…ALGS) and 148 to 166 (EGPT…TDIF). The Selectivity filter part_2 signature appears at 146-150 (GREGP). The Cytoplasmic segment spans residues 167–176 (RVKDDDTRHS). 2 consecutive intramembrane regions (helical) follow at residues 177–189 (LLAS…LAAA) and 193–201 (PLAAIMFVV). Residues 202–214 (EEMRPQFRYSLIS) lie on the Cytoplasmic side of the membrane. The chain crosses the membrane as a helical span at residues 215 to 232 (IRAVIISAIMANIVFRAI). Over 233–252 (NGQEAVITMPQYQSPELQSL) the chain is Periplasmic. A helical membrane pass occupies residues 253–281 (WLFLLLGSLFGVFGVVFNKLITIAQDSFV). Residues 282–287 (ALHKND) lie on the Cytoplasmic side of the membrane. A helical transmembrane segment spans residues 288–309 (RKRYLITGTILGGVFGLLLLYV). The Periplasmic segment spans residues 310 to 329 (PQLTGGGIGLIPDITNGNYS). A run of 2 helical transmembrane segments spans residues 330 to 349 (ISIL…LCFG) and 355 to 376 (GIFA…ASAD). The Selectivity filter part_3 motif lies at 355 to 359 (GIFAP). Residues isoleucine 356 and phenylalanine 357 each coordinate chloride. Topologically, residues 377 to 386 (MLLPSLTIEP) are periplasmic. Positions 387-401 (GVFAIAGMGALFAAT) form an intramembrane region, helical. The segment at residues 402–404 (VRA) is an intramembrane region (note=Loop between two helices). Residues 405–416 (PITGILLVIEMT) constitute an intramembrane region (helical). The segment at residues 417-421 (NNYYL) is an intramembrane region (note=Loop between two helices). Residues 422-438 (ILPLIITSLGAVIVAQL) traverse the membrane as a helical segment. Residues 439-468 (LGGQPIYSQLLHRTLKNDKLRQQDLPENQA) lie on the Cytoplasmic side of the membrane. Tyrosine 445 serves as a coordination point for chloride.

This sequence belongs to the chloride channel (TC 2.A.49) family. ClcA subfamily. In terms of assembly, homodimer.

It localises to the cell inner membrane. The enzyme catalyses 2 chloride(in) + H(+)(out) = 2 chloride(out) + H(+)(in). Functionally, proton-coupled chloride transporter. Functions as antiport system and exchanges two chloride ions for 1 proton. Probably acts as an electrical shunt for an outwardly-directed proton pump that is linked to amino acid decarboxylation, as part of the extreme acid resistance (XAR) response. The polypeptide is H(+)/Cl(-) exchange transporter ClcA (Vibrio campbellii (strain ATCC BAA-1116)).